The following is a 443-amino-acid chain: Proline--tRNA ligase (443 aa).

This sequence belongs to the class-II aminoacyl-tRNA synthetase family. ProS type 2 subfamily. Homodimer.

The protein resides in the cytoplasm. The enzyme catalyses tRNA(Pro) + L-proline + ATP = L-prolyl-tRNA(Pro) + AMP + diphosphate. In terms of biological role, catalyzes the attachment of proline to tRNA(Pro) in a two-step reaction: proline is first activated by ATP to form Pro-AMP and then transferred to the acceptor end of tRNA(Pro). This is Proline--tRNA ligase from Zymomonas mobilis subsp. mobilis (strain ATCC 10988 / DSM 424 / LMG 404 / NCIMB 8938 / NRRL B-806 / ZM1).